A 606-amino-acid chain; its full sequence is MNMFSSLMLASLSVLTLPIMSSILNTHKNSTYPHHVKNIISYAFITSLIPTMMFIHSGQETIISNWHWMTIQTLKLSLSFKLDYFSMIFVPVALFVTWSIMEFSLWYMHSDPYITRFFKYLLTFLITMMILVTANNLFQLFIGWEGVGIMSFLLIGWWYGRTDANTAALQAILYNRIGDIGFIMAMAWFLFNTNTWDLQQIFMLDPNLTNLPLLGLLLAATGKSAQFGLHPWLPSAMEGPTPVSALLHSSTMVVAGVFLLIRFHPLMENNKTIQSLTLCLGAITTLFTAICALTQNDIKKIIAFSTSSQLGLMIVTIGINQPYLAFLHICTHAFFKAMLFMCSGSIIHSLNDEQDIRKTGGLFNAMPFTTTSLIIGSLALTGMPFLTGFYSKDLIIETANTSYTNAWALLMTLIATSLTAVYSTRIIFFALLGQPRFLPLTTINENNPFLINSIKRLLIGSIFAGFFISNNIYPTTIPEMTMPIYMKLTALTVTILGFTLALELSLITHNLKLEHPTNMFKFSNLLGYYPTIMHRLPPLANLSMSQKSASLLLDSIWLENILPKSISQFQMKTSILISTQKGQIKLYFLSFLITLTLSMLLFNLHE.

Transmembrane regions (helical) follow at residues 4 to 24 (FSSL…SSIL), 38 to 58 (NIIS…IHSG), 87 to 107 (MIFV…SLWY), 117 to 137 (FFKY…ANNL), 140 to 160 (LFIG…WWYG), 171 to 191 (AILY…WFLF), 211 to 233 (LPLL…HPWL), 241 to 261 (TPVS…FLLI), 273 to 293 (IQSL…ICAL), 301 to 320 (IIAF…IGIN), 325 to 347 (AFLH…GSII), 366 to 386 (MPFT…MPFL), 413 to 433 (LIAT…ALLG), 457 to 477 (LLIG…PTTI), 488 to 508 (LTAL…SLIT), and 584 to 604 (IKLY…LFNL).

Belongs to the complex I subunit 5 family. Core subunit of respiratory chain NADH dehydrogenase (Complex I) which is composed of 45 different subunits.

Its subcellular location is the mitochondrion inner membrane. The catalysed reaction is a ubiquinone + NADH + 5 H(+)(in) = a ubiquinol + NAD(+) + 4 H(+)(out). In terms of biological role, core subunit of the mitochondrial membrane respiratory chain NADH dehydrogenase (Complex I) which catalyzes electron transfer from NADH through the respiratory chain, using ubiquinone as an electron acceptor. Essential for the catalytic activity and assembly of complex I. This Equus asinus (Donkey) protein is NADH-ubiquinone oxidoreductase chain 5 (MT-ND5).